A 159-amino-acid polypeptide reads, in one-letter code: Phosphopantetheine adenylyltransferase (159 aa).

Position 10 (Thr10) interacts with substrate. Residues 10 to 11 (TF) and His18 contribute to the ATP site. Positions 42, 74, and 88 each coordinate substrate. Residues 89–91 (GLR), Glu99, and 124–130 (WSFISSS) each bind ATP.

This sequence belongs to the bacterial CoaD family. Homohexamer. Requires Mg(2+) as cofactor.

It is found in the cytoplasm. The catalysed reaction is (R)-4'-phosphopantetheine + ATP + H(+) = 3'-dephospho-CoA + diphosphate. Its pathway is cofactor biosynthesis; coenzyme A biosynthesis; CoA from (R)-pantothenate: step 4/5. Reversibly transfers an adenylyl group from ATP to 4'-phosphopantetheine, yielding dephospho-CoA (dPCoA) and pyrophosphate. This Yersinia enterocolitica serotype O:8 / biotype 1B (strain NCTC 13174 / 8081) protein is Phosphopantetheine adenylyltransferase.